The primary structure comprises 147 residues: MAAAADSFSGGPAGVRLPRSPPLKVLAEQLRRDAEGGPGAWRLSRAAAGRGPLDLAAVWMQGRVVMADRGEARLRDPSGDFSVRGLERVPRGRPCLVPGKYVMVMGVVQACSPEPCLQAVKMTDLSDNPIHESMWELEVEDLHRNIP.

A disordered region spans residues 1-20 (MAAAADSFSGGPAGVRLPRS). Ala2 bears the N-acetylalanine mark. The residue at position 7 (Ser7) is a Phosphoserine. Residues 44–114 (SRAAAGRGPL…MGVVQACSPE (71 aa)) constitute a DNA-binding region (OB).

The protein belongs to the RMI2 family. In terms of assembly, component of the RMI complex, containing at least TOP3A, RMI1 and RMI2. The RMI complex interacts with BLM. In terms of processing, phosphorylated during mitosis.

It is found in the nucleus. In terms of biological role, essential component of the RMI complex, a complex that plays an important role in the processing of homologous recombination intermediates. It is required to regulate sister chromatid segregation and to limit DNA crossover. Essential for the stability, localization, and function of BLM, TOP3A, and complexes containing BLM. In the RMI complex, it is required to target BLM to chromatin and stress-induced nuclear foci and mitotic phosphorylation of BLM. This Homo sapiens (Human) protein is RecQ-mediated genome instability protein 2 (RMI2).